A 113-amino-acid polypeptide reads, in one-letter code: Con-Ins G3 (113 aa).

Residues 1–21 (MTTSFYFLLVALGLLLYVCQS) form the signal peptide. Residues 22-29 (SFGNQHTR) constitute a propeptide that is removed on maturation. A 4-hydroxyproline; partial modification is found at Pro-34. 3 cysteine pairs are disulfide-bonded: Cys-38–Cys-99, Cys-50–Cys-112, and Cys-98–Cys-103. A 4-carboxyglutamate modification is found at Glu-41. Histidine amide is present on His-51. A propeptide spans 52-92 (GKRNDAGKKRGRASPLWQRQGFLSMLKAKRNEAFFLQRDGR) (c peptide). Glu-96 carries the post-translational modification 4-carboxyglutamate. 4-hydroxyproline; partial is present on Pro-102.

This sequence belongs to the insulin family. As to quaternary structure, heterodimer of A and B chains; disulfide-linked. In terms of processing, it is noteworthy that in this dimer, in contrast to Con-Ins G1, the chain B is amidated and not the chain A. Expressed by the venom gland.

The protein localises to the secreted. This venom insulin, from a fish-hunting cone snail, facilitates prey capture by rapidly inducing hypoglycemic shock. It is one of the smallest known insulin found in nature and lacks the C-terminal segment of the B chain that, in human insulin, mediates engagement of the insulin receptor (INSR) and assembly of the hormone's hexameric storage form. Despite lacking this segment, it both binds and activates human insulin receptor (long isoform (HIR-B)) with a high potency (EC(50)=242 nM). In vivo, intraperitoneal injection of this peptide into zebrafish lowers blood glucose with a lower potency than human insulin. In addition, when applied to water, this peptide reduces overall locomotor activity of zebrafish larvae, observed as a significant decrease in the percentage of time spent swimming and movement frequency. When tested on a mouse model of diabetes, this insulin also lowers blood glucose with a 10-fold lower potency than human insulin. This Conus geographus (Geography cone) protein is Con-Ins G3.